A 275-amino-acid polypeptide reads, in one-letter code: Elongation factor Ts (275 aa).

The segment at 80–83 (TDFV) is involved in Mg(2+) ion dislocation from EF-Tu.

The protein belongs to the EF-Ts family.

The protein resides in the cytoplasm. In terms of biological role, associates with the EF-Tu.GDP complex and induces the exchange of GDP to GTP. It remains bound to the aminoacyl-tRNA.EF-Tu.GTP complex up to the GTP hydrolysis stage on the ribosome. The sequence is that of Elongation factor Ts from Kineococcus radiotolerans (strain ATCC BAA-149 / DSM 14245 / SRS30216).